The primary structure comprises 233 residues: Ribosomal RNA small subunit methyltransferase G (233 aa).

Residues G91, M96, 142-143, and R157 each bind S-adenosyl-L-methionine; that span reads VE.

The protein belongs to the methyltransferase superfamily. RNA methyltransferase RsmG family.

The protein resides in the cytoplasm. It catalyses the reaction guanosine(527) in 16S rRNA + S-adenosyl-L-methionine = N(7)-methylguanosine(527) in 16S rRNA + S-adenosyl-L-homocysteine. Its function is as follows. Specifically methylates the N7 position of guanine in position 527 of 16S rRNA. The sequence is that of Ribosomal RNA small subunit methyltransferase G from Cupriavidus necator (strain ATCC 17699 / DSM 428 / KCTC 22496 / NCIMB 10442 / H16 / Stanier 337) (Ralstonia eutropha).